The chain runs to 138 residues: Dual specificity phosphatase ibp1 (138 aa).

The Rhodanese domain maps to 19-133; the sequence is SPNEISIIDV…WKRRYGGQQG (115 aa). Cys70 (phosphocysteine intermediate) is an active-site residue.

Belongs to the MPI phosphatase family.

It localises to the cytoplasm. The protein resides in the nucleus. It catalyses the reaction O-phospho-L-tyrosyl-[protein] + H2O = L-tyrosyl-[protein] + phosphate. Functionally, may play a role in DNA replication checkpoint via regulation of hsk1 or may act downstream of hsk1 in an S phase regulatory pathway. This is Dual specificity phosphatase ibp1 (ibp1) from Schizosaccharomyces pombe (strain 972 / ATCC 24843) (Fission yeast).